A 129-amino-acid polypeptide reads, in one-letter code: MARPKRTVKKREKKNVPVGLAHIQATFNNTIVTFTDTRGNTISWASAGQSGFKGSRKSTPFAAQMAAEQAAKKAQENGMRTVGIYVKGPGSGREAAMRAINAAGFKVAFIRDITPIPHNGCRPPKRRRV.

The protein belongs to the universal ribosomal protein uS11 family. As to quaternary structure, part of the 30S ribosomal subunit. Interacts with proteins S7 and S18. Binds to IF-3.

Located on the platform of the 30S subunit, it bridges several disparate RNA helices of the 16S rRNA. Forms part of the Shine-Dalgarno cleft in the 70S ribosome. The sequence is that of Small ribosomal subunit protein uS11 from Nitratidesulfovibrio vulgaris (strain ATCC 29579 / DSM 644 / CCUG 34227 / NCIMB 8303 / VKM B-1760 / Hildenborough) (Desulfovibrio vulgaris).